The chain runs to 95 residues: Ferredoxin-4 (95 aa).

One can recognise a 2Fe-2S ferredoxin-type domain in the interval 2–95; the sequence is DKATLTFTDV…LGGAVKVRPA (94 aa). Residues C38, C43, C46, and C81 each coordinate [2Fe-2S] cluster.

This sequence belongs to the 2Fe2S plant-type ferredoxin family. It depends on [2Fe-2S] cluster as a cofactor.

Ferredoxins are iron-sulfur proteins that transfer electrons in a wide variety of metabolic reactions. This ferredoxin is required for nitrogen fixation. The polypeptide is Ferredoxin-4 (fdxC) (Rhodobacter capsulatus (Rhodopseudomonas capsulata)).